A 232-amino-acid polypeptide reads, in one-letter code: Succinyl-CoA:3-ketoacid coenzyme A transferase subunit A (232 aa).

A CoA-binding site is contributed by 24–30 (GGFGLCG).

The protein belongs to the 3-oxoacid CoA-transferase subunit A family. As to quaternary structure, heterodimer of a subunit A and a subunit B.

It carries out the reaction a 3-oxo acid + succinyl-CoA = a 3-oxoacyl-CoA + succinate. The polypeptide is Succinyl-CoA:3-ketoacid coenzyme A transferase subunit A (scoA) (Helicobacter pylori (strain J99 / ATCC 700824) (Campylobacter pylori J99)).